The sequence spans 597 residues: Probable bifunctional ADP-ribose hydrolase/ADP-ribosyltransferase (597 aa).

Positions 99–299 constitute a Macro domain; it reads SRLIKHGDLG…FYSKLLGPSH (201 aa). Residues D118, I119, and N133 each contribute to the ADP-D-ribose site. Zn(2+) is bound by residues C139, H144, and C146. Residues C146, I147, D148, S244, T245, G246, and F248 each contribute to the ADP-D-ribose site. The Deacetylase sirtuin-type domain occupies 307 to 597; the sequence is ENTPQGSLSL…IGRAIPLLLE (291 aa). NAD(+)-binding positions include A333, 418–421, and Q438; that span reads SNAD. Zn(2+)-binding residues include C446, C450, C485, and C488. Position 584 (V584) interacts with NAD(+).

This sequence in the N-terminal section; belongs to the MacroD-type family. Zn-Macro subfamily. It in the C-terminal section; belongs to the sirtuin family. Class M subfamily. In terms of assembly, monomer. Zn(2+) serves as cofactor.

The catalysed reaction is 5-O-(ADP-D-ribosyl)-L-glutamyl-[protein] + H2O = L-glutamyl-[protein] + ADP-D-ribose + H(+). Its function is as follows. Is probably a bifunctional enzyme with ADP-ribosyltransferase and ADP-ribosylhydrolase activities. In vitro, can act as an ADP-ribosylhydrolase that hydrolyzes ADP-ribosyl-glutamate bonds. It can remove the ADP-ribosyl modification from the human mono-ADP-ribosylated PARP1 E988Q mutant, which is primarily modified on glutamate site with only minor aspartate contribution. It cannot hydrolyze the ADP-ribosyl-arpartate bond in ribosylated S.pyogenes GcvH-L. This Fusarium oxysporum f. sp. cubense protein is Probable bifunctional ADP-ribose hydrolase/ADP-ribosyltransferase.